The chain runs to 72 residues: Penaeidin-2b (72 aa).

The N-terminal stretch at 1–21 is a signal peptide; sequence MRLVVCLVFLASFALVCQGEA. Intrachain disulfides connect Cys-45–Cys-59, Cys-48–Cys-66, and Cys-60–Cys-67. Lys-71 bears the Lysine amide mark.

It belongs to the penaeidin family.

Its subcellular location is the cytoplasmic granule. In terms of biological role, antibacterial and antifungal activity. Presents chitin-binding activity. The chain is Penaeidin-2b from Penaeus vannamei (Whiteleg shrimp).